We begin with the raw amino-acid sequence, 294 residues long: ATP phosphoribosyltransferase (294 aa).

Belongs to the ATP phosphoribosyltransferase family. Long subfamily. Mg(2+) serves as cofactor.

Its subcellular location is the cytoplasm. The enzyme catalyses 1-(5-phospho-beta-D-ribosyl)-ATP + diphosphate = 5-phospho-alpha-D-ribose 1-diphosphate + ATP. It participates in amino-acid biosynthesis; L-histidine biosynthesis; L-histidine from 5-phospho-alpha-D-ribose 1-diphosphate: step 1/9. Feedback inhibited by histidine. In terms of biological role, catalyzes the condensation of ATP and 5-phosphoribose 1-diphosphate to form N'-(5'-phosphoribosyl)-ATP (PR-ATP). Has a crucial role in the pathway because the rate of histidine biosynthesis seems to be controlled primarily by regulation of HisG enzymatic activity. The sequence is that of ATP phosphoribosyltransferase from Chlorobium chlorochromatii (strain CaD3).